The chain runs to 387 residues: 3-ketoacyl-CoA thiolase (387 aa).

C91 functions as the Acyl-thioester intermediate in the catalytic mechanism. Catalysis depends on proton acceptor residues H343 and C373.

The protein belongs to the thiolase-like superfamily. Thiolase family. As to quaternary structure, heterotetramer of two alpha chains (FadB) and two beta chains (FadA).

It localises to the cytoplasm. The catalysed reaction is an acyl-CoA + acetyl-CoA = a 3-oxoacyl-CoA + CoA. It participates in lipid metabolism; fatty acid beta-oxidation. Functionally, catalyzes the final step of fatty acid oxidation in which acetyl-CoA is released and the CoA ester of a fatty acid two carbons shorter is formed. The chain is 3-ketoacyl-CoA thiolase from Vibrio vulnificus (strain YJ016).